Consider the following 164-residue polypeptide: Nucleotide-binding protein Emin_0136 (164 aa).

This sequence belongs to the YajQ family.

Its function is as follows. Nucleotide-binding protein. This is Nucleotide-binding protein Emin_0136 from Elusimicrobium minutum (strain Pei191).